The primary structure comprises 336 residues: Phosphate acyltransferase (336 aa).

This sequence belongs to the PlsX family. In terms of assembly, homodimer. Probably interacts with PlsY.

It localises to the cytoplasm. The catalysed reaction is a fatty acyl-[ACP] + phosphate = an acyl phosphate + holo-[ACP]. It participates in lipid metabolism; phospholipid metabolism. Functionally, catalyzes the reversible formation of acyl-phosphate (acyl-PO(4)) from acyl-[acyl-carrier-protein] (acyl-ACP). This enzyme utilizes acyl-ACP as fatty acyl donor, but not acyl-CoA. In Pseudomonas putida (strain GB-1), this protein is Phosphate acyltransferase.